The following is a 228-amino-acid chain: Orotidine 5'-phosphate decarboxylase (228 aa).

Substrate contacts are provided by residues aspartate 20, lysine 42, aspartate 70–threonine 79, serine 127, proline 180–glycine 190, glycine 202, and arginine 203. Lysine 72 functions as the Proton donor in the catalytic mechanism.

Belongs to the OMP decarboxylase family. Type 1 subfamily. As to quaternary structure, homodimer.

It catalyses the reaction orotidine 5'-phosphate + H(+) = UMP + CO2. The protein operates within pyrimidine metabolism; UMP biosynthesis via de novo pathway; UMP from orotate: step 2/2. Catalyzes the decarboxylation of orotidine 5'-monophosphate (OMP) to uridine 5'-monophosphate (UMP). The sequence is that of Orotidine 5'-phosphate decarboxylase (pyrF) from Methanothermobacter thermautotrophicus (strain ATCC 29096 / DSM 1053 / JCM 10044 / NBRC 100330 / Delta H) (Methanobacterium thermoautotrophicum).